We begin with the raw amino-acid sequence, 129 residues long: Insulin-like growth factor 2 (129 aa).

An N-terminal signal peptide occupies residues 1–24 (MGVPMGKSLLAPLTFLALASCCFA). Positions 25 to 52 (AYRPSETLCGGELVDTLQFVCGDRGFYF) are b. 3 disulfide bridges follow: cysteine 33–cysteine 72, cysteine 45–cysteine 85, and cysteine 71–cysteine 76. The segment at 53-65 (SRPASRVSRRSSR) is c. Residues 66–86 (GIVEECCFRSCDLALLETYCA) form an a region. The tract at residues 87-92 (TPAKSE) is d. A propeptide spans 93–129 (RDVSTPPTVLPDNFPRYPVGKFFQYDTWKQSAQRLRR) (e peptide).

Belongs to the insulin family. Interacts with MYORG; this interaction is required for IGF2 secretion. Interacts with integrins ITGAV:ITGB3 and ITGA6:ITGB4; integrin-binding is required for IGF2 signaling. Post-translationally, proteolytically processed by PCSK4, proIGF2 is cleaved at Arg-129 and Arg-92 to generate big-IGF2 and mature IGF2.

The protein localises to the secreted. In terms of biological role, the insulin-like growth factors possess growth-promoting activity. Major fetal growth hormone in mammals. Plays a key role in regulating fetoplacental development. IGF2 is influenced by placental lactogen. Also involved in tissue differentiation. In adults, involved in glucose metabolism in adipose tissue, skeletal muscle and liver. Acts as a ligand for integrin which is required for IGF2 signaling. Positively regulates myogenic transcription factor MYOD1 function by facilitating the recruitment of transcriptional coactivators, thereby controlling muscle terminal differentiation. Inhibits myoblast differentiation and modulates metabolism via increasing the mitochondrial respiration rate. Preptin undergoes glucose-mediated co-secretion with insulin, and acts as a physiological amplifier of glucose-mediated insulin secretion. Exhibits osteogenic properties by increasing osteoblast mitogenic activity through phosphoactivation of MAPK1 and MAPK3. The sequence is that of Insulin-like growth factor 2 from Neovison vison (American mink).